A 213-amino-acid polypeptide reads, in one-letter code: Peroxiredoxin-5, mitochondrial (213 aa).

A mitochondrion-targeting transit peptide spans 1-51 (MVQLRFCVLGSIAGSVLRASATWTCVAGRAGRKGAGWECGGARSFSSAAVT). The 159-residue stretch at 55–213 (IKVGDTIPSV…SLAPNILSQL (159 aa)) folds into the Thioredoxin domain. Lys74 carries the post-translational modification N6-acetyllysine. Lys82 carries the post-translational modification N6-acetyllysine; alternate. Residue Lys82 is modified to N6-succinyllysine; alternate. The active-site Cysteine sulfenic acid (-SOH) intermediate is the Cys99. A lipid anchor (S-palmitoyl cysteine) is attached at Cys99. Cysteines 99 and 203 form a disulfide. Lys115 carries the N6-succinyllysine modification. A phosphoserine mark is found at Ser170 and Ser181. The Microbody targeting signal motif lies at 211-213 (SQL).

Belongs to the peroxiredoxin family. Prx5 subfamily. In terms of assembly, monomer. Post-translationally, S-palmitoylated. Palmitoylation occurs on the active site, inhibiting its reactivity; therefore PRDX5 palmitoylation status determines its antioxidant capacity. In terms of processing, S-palmitoylated. Depalmitoylated by ABHD10.

It localises to the mitochondrion. The protein localises to the cytoplasm. Its subcellular location is the peroxisome matrix. The catalysed reaction is a hydroperoxide + [thioredoxin]-dithiol = an alcohol + [thioredoxin]-disulfide + H2O. Functionally, thiol-specific peroxidase that catalyzes the reduction of hydrogen peroxide and organic hydroperoxides to water and alcohols, respectively. Plays a role in cell protection against oxidative stress by detoxifying peroxides and as sensor of hydrogen peroxide-mediated signaling events. The sequence is that of Peroxiredoxin-5, mitochondrial from Rattus norvegicus (Rat).